Here is a 344-residue protein sequence, read N- to C-terminus: MTLILGLESSCDETAAALVTGDRRVLAHRVAGQEAEHRPYGGVVPEIAARAHVDRLAPIVEGVLDDAGVTLADVDAIAATAGPGLIGGVMVGLVTGKALAHAANKPLIAVNHLEGHALSPRLADPTLDFPYLLLLVSGGHCQLLLVKGVGDYRRLATTIDDAAGEAFDKTAKLLGLGYPGGPAVERIAAEGDPHAVPLPRPLVGSAEPHFSFAGLKSAVARAAASGTHDVADLAASFQQAVVDCLVDRSRGALAACPDARAFVVAGGVAANGAIRTALTDLAARFDKPFVAPPLWLCTDNGAMIAWAGAERFAAGLTDPLDTAARPRWPLDPAAEAVRGAGVKA.

Residues histidine 112 and histidine 116 each contribute to the Fe cation site. Substrate-binding positions include 135-139 (LVSGG), aspartate 168, glycine 181, and asparagine 271. A Fe cation-binding site is contributed by aspartate 299.

The protein belongs to the KAE1 / TsaD family. Fe(2+) serves as cofactor.

Its subcellular location is the cytoplasm. It catalyses the reaction L-threonylcarbamoyladenylate + adenosine(37) in tRNA = N(6)-L-threonylcarbamoyladenosine(37) in tRNA + AMP + H(+). Its function is as follows. Required for the formation of a threonylcarbamoyl group on adenosine at position 37 (t(6)A37) in tRNAs that read codons beginning with adenine. Is involved in the transfer of the threonylcarbamoyl moiety of threonylcarbamoyl-AMP (TC-AMP) to the N6 group of A37, together with TsaE and TsaB. TsaD likely plays a direct catalytic role in this reaction. This chain is tRNA N6-adenosine threonylcarbamoyltransferase, found in Sphingopyxis alaskensis (strain DSM 13593 / LMG 18877 / RB2256) (Sphingomonas alaskensis).